Reading from the N-terminus, the 801-residue chain is Na(+)/H(+) antiporter subunit A1 (801 aa).

19 consecutive transmembrane segments (helical) span residues 1-21 (MSLLHIAVILPLIFVLIIPIL), 28-48 (IHLGWFVLPVPIVIFIYMLTL), 79-99 (LGLLFSLLISGIGSLVVLYSI), 117-137 (LFMGAMLGVVLSDNVIILYLF), 166-186 (LIITVFGGLSLLGGIILLAIP), 206-226 (PFFIFAMILIMIGAFTKSAQF), 265-285 (IFAASQGWIWTVTLVGLITLF), 300-320 (ILAFSTVSQLGMIMAMLGIGA), 337-357 (FTAAIFHLINHATFKGALFMI), 373-393 (LGGLLTIMPISFTITVITALS), 427-447 (LGYLFPIIGIVGSVFTFVYSI), 472-492 (ILMLLSPAILATLVIVFGLFP), 522-542 (GLTPAFLSTLVIYILGILLIV), 591-611 (LVIIFGALILLTFVTVFSVPF), 623-643 (IFEVCIVILLLSAAFLILFAK), 646-666 (LFNIIMLSAVGYAVSVLFIFF), 671-691 (LALTQFVVESISTALFLLCFY), 707-727 (LTNALIAGGVGLSVIIIGLIA), and 764-784 (MDTLFESSVLGIAGLAVYTMI).

This sequence belongs to the CPA3 antiporters (TC 2.A.63) subunit A family. May form a heterooligomeric complex that consists of seven subunits: mnhA1, mnhB1, mnhC1, mnhD1, mnhE1, mnhF1 and mnhG1.

It localises to the cell membrane. Functionally, mnh complex is a Na(+)/H(+) antiporter involved in Na(+) excretion. The protein is Na(+)/H(+) antiporter subunit A1 (mnhA1) of Staphylococcus aureus (strain bovine RF122 / ET3-1).